The chain runs to 89 residues: Class II hydrophobin 2 (89 aa).

An N-terminal signal peptide occupies residues 1–15; sequence MKLYIAAALLTLGLA. Cystine bridges form between C34/C74, C45/C66, C46/C58, and C75/C86.

It belongs to the cerato-ulmin hydrophobin family. Homodimer. Homodimers further self-assemble to form highly ordered films at water-air interfaces through intermolecular interactions.

It is found in the secreted. It localises to the cell wall. Its function is as follows. Aerial growth, conidiation, and dispersal of filamentous fungi in the environment rely upon a capability of their secreting small amphipathic proteins called hydrophobins (HPBs) with low sequence identity. Class I can self-assemble into an outermost layer of rodlet bundles on aerial cell surfaces, conferring cellular hydrophobicity that supports fungal growth, development and dispersal; whereas Class II form highly ordered films at water-air interfaces through intermolecular interactions but contribute nothing to the rodlet structure. The protein is Class II hydrophobin 2 of Trichoderma asperellum (strain ATCC 204424 / CBS 433.97 / NBRC 101777).